The chain runs to 124 residues: Large ribosomal subunit protein uL18 (124 aa).

The protein belongs to the universal ribosomal protein uL18 family. In terms of assembly, part of the 50S ribosomal subunit; part of the 5S rRNA/L5/L18/L25 subcomplex. Contacts the 5S and 23S rRNAs.

Its function is as follows. This is one of the proteins that bind and probably mediate the attachment of the 5S RNA into the large ribosomal subunit, where it forms part of the central protuberance. This chain is Large ribosomal subunit protein uL18, found in Koribacter versatilis (strain Ellin345).